A 690-amino-acid chain; its full sequence is Elongation factor G (690 aa).

The region spanning 8–282 (KMTRNIGIMA…AVIDYLPSPL (275 aa)) is the tr-type G domain. GTP is bound by residues 17 to 24 (AHIDAGKT), 81 to 85 (DTPGH), and 135 to 138 (NKMD).

This sequence belongs to the TRAFAC class translation factor GTPase superfamily. Classic translation factor GTPase family. EF-G/EF-2 subfamily.

It localises to the cytoplasm. Functionally, catalyzes the GTP-dependent ribosomal translocation step during translation elongation. During this step, the ribosome changes from the pre-translocational (PRE) to the post-translocational (POST) state as the newly formed A-site-bound peptidyl-tRNA and P-site-bound deacylated tRNA move to the P and E sites, respectively. Catalyzes the coordinated movement of the two tRNA molecules, the mRNA and conformational changes in the ribosome. In Acholeplasma laidlawii (strain PG-8A), this protein is Elongation factor G.